A 559-amino-acid chain; its full sequence is ATP synthase subunit beta-3, mitochondrial (559 aa).

Residues 1 to 28 show a composition bias toward low complexity; that stretch reads MASRRILSSLLRSSSSRSTSKSSLIGSR. The interval 1–39 is disordered; the sequence is MASRRILSSLLRSSSSRSTSKSSLIGSRNPRLLSPGPAH. The N-terminal 54 residues, 1–54, are a transit peptide targeting the mitochondrion; that stretch reads MASRRILSSLLRSSSSRSTSKSSLIGSRNPRLLSPGPAHGAAPCGTLLGRVAEY. S62 bears the Phosphoserine mark. Residue 234-241 coordinates ATP; sequence GGAGVGKT.

It belongs to the ATPase alpha/beta chains family. F-type ATPases have 2 components, CF(1) - the catalytic core - and CF(0) - the membrane proton channel. CF(1) has five subunits: alpha(3), beta(3), gamma(1), delta(1), epsilon(1). CF(0) has three main subunits: a, b and c.

Its subcellular location is the mitochondrion. It is found in the mitochondrion inner membrane. The enzyme catalyses ATP + H2O + 4 H(+)(in) = ADP + phosphate + 5 H(+)(out). In terms of biological role, mitochondrial membrane ATP synthase (F(1)F(0) ATP synthase or Complex V) produces ATP from ADP in the presence of a proton gradient across the membrane which is generated by electron transport complexes of the respiratory chain. F-type ATPases consist of two structural domains, F(1) - containing the extramembraneous catalytic core, and F(0) - containing the membrane proton channel, linked together by a central stalk and a peripheral stalk. During catalysis, ATP synthesis in the catalytic domain of F(1) is coupled via a rotary mechanism of the central stalk subunits to proton translocation. Subunits alpha and beta form the catalytic core in F(1). Rotation of the central stalk against the surrounding alpha(3)beta(3) subunits leads to hydrolysis of ATP in three separate catalytic sites on the beta subunits. The protein is ATP synthase subunit beta-3, mitochondrial of Arabidopsis thaliana (Mouse-ear cress).